Reading from the N-terminus, the 270-residue chain is MSEFKIVSRKDLYNEGEGLGEDYDSNSSSKNNSEHVEVLVPPTEFEFVEVERTDSSLDLKESNNSAHEQKEEKQEEFEFPLFSFGVVEASTSPAQEEQGSSTQEKDTPQTEVSLMKISLKEPEEEIINQERPKDYYFASYSADQKLQFQQSSIDYDVIIQESTKILEDDLRIRDKWPYCQGRIIDLYKHNARIELEQQKELKIKKRRPGQKQRAAKKLALERTKERDTKAREIKKQLKKKFHKRGGKKNKKKVPLNPLAKAGSTPKFRTE.

Composition is skewed to basic and acidic residues over residues 1–13 and 49–73; these read MSEF…KDLY and EVER…KEEK. Disordered stretches follow at residues 1-76, 90-111, and 204-270; these read MSEF…KQEE, STSP…PQTE, and KKRR…FRTE. The segment covering 90–102 has biased composition (polar residues); sequence STSPAQEEQGSST. A compositionally biased stretch (basic residues) spans 204-216; that stretch reads KKRRPGQKQRAAK. Basic and acidic residues predominate over residues 218-235; that stretch reads LALERTKERDTKAREIKK. A compositionally biased stretch (basic residues) spans 236-253; sequence QLKKKFHKRGGKKNKKKV.

This is an uncharacterized protein from Saccharomyces cerevisiae (strain ATCC 204508 / S288c) (Baker's yeast).